Consider the following 229-residue polypeptide: Potassium/proton antiporter CemA (229 aa).

3 helical membrane passes run 6–26 (AFIP…ISLC), 107–127 (ILHF…SFWG), and 189–209 (ILSG…KYWI).

The protein belongs to the CemA family.

It localises to the plastid. The protein localises to the chloroplast inner membrane. It catalyses the reaction K(+)(in) + H(+)(out) = K(+)(out) + H(+)(in). Contributes to K(+)/H(+) antiport activity by supporting proton efflux to control proton extrusion and homeostasis in chloroplasts in a light-dependent manner to modulate photosynthesis. Prevents excessive induction of non-photochemical quenching (NPQ) under continuous-light conditions. Indirectly promotes efficient inorganic carbon uptake into chloroplasts. The protein is Potassium/proton antiporter CemA of Arabis hirsuta (Hairy rock-cress).